Here is an 81-residue protein sequence, read N- to C-terminus: Three-finger toxin MALT0051C (81 aa).

An N-terminal signal peptide occupies residues 1–21; sequence MKTLLLTLVVVTVVCLDFGHT. 4 disulfide bridges follow: Cys24-Cys43, Cys38-Cys60, Cys62-Cys73, and Cys74-Cys79.

This sequence belongs to the three-finger toxin family. Short-chain subfamily. Type I alpha-neurotoxin sub-subfamily. In terms of tissue distribution, expressed by the venom gland.

It is found in the secreted. Functionally, binds to muscle nicotinic acetylcholine receptor (nAChR) and inhibit acetylcholine from binding to the receptor, thereby impairing neuromuscular transmission. This Micrurus altirostris (Uruguayan coral snake) protein is Three-finger toxin MALT0051C.